The primary structure comprises 508 residues: Photosystem II CP47 reaction center protein (508 aa).

The next 6 membrane-spanning stretches (helical) occupy residues 21–36, 101–115, 140–156, 203–218, 237–252, and 457–472; these read SVHI…WAGS, IVFS…IWHW, GIHL…FGAF, IAAG…FHLS, VLSS…AFVV, and SFAL…HGAR.

The protein belongs to the PsbB/PsbC family. PsbB subfamily. In terms of assembly, PSII is composed of 1 copy each of membrane proteins PsbA, PsbB, PsbC, PsbD, PsbE, PsbF, PsbH, PsbI, PsbJ, PsbK, PsbL, PsbM, PsbT, PsbX, PsbY, PsbZ, Psb30/Ycf12, at least 3 peripheral proteins of the oxygen-evolving complex and a large number of cofactors. It forms dimeric complexes. It depends on Binds multiple chlorophylls. PSII binds additional chlorophylls, carotenoids and specific lipids. as a cofactor.

It localises to the plastid. The protein localises to the chloroplast thylakoid membrane. One of the components of the core complex of photosystem II (PSII). It binds chlorophyll and helps catalyze the primary light-induced photochemical processes of PSII. PSII is a light-driven water:plastoquinone oxidoreductase, using light energy to abstract electrons from H(2)O, generating O(2) and a proton gradient subsequently used for ATP formation. This is Photosystem II CP47 reaction center protein from Dioscorea elephantipes (Elephant's foot yam).